Reading from the N-terminus, the 80-residue chain is Type VII secretion system accessory factor EsaB (80 aa).

The protein belongs to the EsaB family.

It is found in the cytoplasm. Its function is as follows. Seems to regulate secreted factors that contribute to the establishment of persistent infections in the host. This Staphylococcus aureus (strain COL) protein is Type VII secretion system accessory factor EsaB.